The primary structure comprises 192 residues: Phosphoheptose isomerase (192 aa).

In terms of domain architecture, SIS spans 37–192; it reads LADSFKAGGK…IQLIEKEMVK (156 aa). 52–54 contacts substrate; that stretch reads NGG. Positions 61 and 65 each coordinate Zn(2+). Substrate-binding positions include E65, 93 to 94, 119 to 121, S124, and Q172; these read ND and STS. Positions 172 and 180 each coordinate Zn(2+).

Belongs to the SIS family. GmhA subfamily. In terms of assembly, homotetramer. Zn(2+) serves as cofactor.

Its subcellular location is the cytoplasm. The catalysed reaction is 2 D-sedoheptulose 7-phosphate = D-glycero-alpha-D-manno-heptose 7-phosphate + D-glycero-beta-D-manno-heptose 7-phosphate. Its pathway is carbohydrate biosynthesis; D-glycero-D-manno-heptose 7-phosphate biosynthesis; D-glycero-alpha-D-manno-heptose 7-phosphate and D-glycero-beta-D-manno-heptose 7-phosphate from sedoheptulose 7-phosphate: step 1/1. Its function is as follows. Catalyzes the isomerization of sedoheptulose 7-phosphate in D-glycero-D-manno-heptose 7-phosphate. The polypeptide is Phosphoheptose isomerase (Shigella dysenteriae serotype 1 (strain Sd197)).